Consider the following 420-residue polypeptide: Serine hydroxymethyltransferase (420 aa).

(6S)-5,6,7,8-tetrahydrofolate contacts are provided by residues L121 and 125 to 127 (GHL). N6-(pyridoxal phosphate)lysine is present on K230. Residues E246 and 354–356 (SPF) contribute to the (6S)-5,6,7,8-tetrahydrofolate site.

The protein belongs to the SHMT family. Homodimer. Pyridoxal 5'-phosphate serves as cofactor.

The protein localises to the cytoplasm. It carries out the reaction (6R)-5,10-methylene-5,6,7,8-tetrahydrofolate + glycine + H2O = (6S)-5,6,7,8-tetrahydrofolate + L-serine. It participates in one-carbon metabolism; tetrahydrofolate interconversion. It functions in the pathway amino-acid biosynthesis; glycine biosynthesis; glycine from L-serine: step 1/1. In terms of biological role, catalyzes the reversible interconversion of serine and glycine with tetrahydrofolate (THF) serving as the one-carbon carrier. This reaction serves as the major source of one-carbon groups required for the biosynthesis of purines, thymidylate, methionine, and other important biomolecules. Also exhibits THF-independent aldolase activity toward beta-hydroxyamino acids, producing glycine and aldehydes, via a retro-aldol mechanism. The protein is Serine hydroxymethyltransferase of Rickettsia rickettsii (strain Iowa).